Here is a 123-residue protein sequence, read N- to C-terminus: Large ribosomal subunit protein bL12 (123 aa).

It belongs to the bacterial ribosomal protein bL12 family. In terms of assembly, homodimer. Part of the ribosomal stalk of the 50S ribosomal subunit. Forms a multimeric L10(L12)X complex, where L10 forms an elongated spine to which 2 to 4 L12 dimers bind in a sequential fashion. Binds GTP-bound translation factors.

Forms part of the ribosomal stalk which helps the ribosome interact with GTP-bound translation factors. Is thus essential for accurate translation. This Borrelia turicatae (strain 91E135) protein is Large ribosomal subunit protein bL12.